The sequence spans 530 residues: Capsid protein VP1 (530 aa).

A disordered region spans residues 1–20 (MMMASKDATSSVDGASGAGQ). Positions 1-225 (MMMASKDATS…FLFLVPPTVE (225 aa)) are shell domain. A P1 sub-domain 1 region spans residues 226-278 (QKTRPFTLPNLPLSSLSNSRAPLPISSMGISPDNVQSVQFQNGRCTLDGRLVG). Residues 226–530 (QKTRPFTLPN…SARGRLGLRR (305 aa)) are protruding domain. Residues 279 to 405 (TTPVSLSHVA…GSSITEATHL (127 aa)) are P2 sub-domain. The segment at 406 to 530 (APSVYPPGFG…SARGRLGLRR (125 aa)) is P1 sub-domain 2. Residues 523-530 (RGRLGLRR) form a plays a role in binding to host histo-blood group structures antigens and in the formation of P-particles region.

The protein belongs to the caliciviridae capsid protein family. As to quaternary structure, homodimer. Homomultimer. Interacts with the minor capsid protein VP2. Interacts (via C-terminus) with host type I histo-blood group structures antigens at the surface of target cells. Post-translationally, may be cleaved by host protease to generate soluble capsid protein. Assembled capsid cannot be cleaved.

The protein resides in the virion. It is found in the host cytoplasm. Its function is as follows. Capsid protein self assembles to form an icosahedral capsid with a T=3 symmetry, about 38 nm in diameter, and consisting of 180 capsid proteins. A smaller form of capsid with a diameter of 23 nm might be capsid proteins assembled as icosahedron with T=1 symmetry. The capsid encapsulates the genomic RNA and is decorated with VP2 proteins. Attaches virion to target cells by binding histo-blood group antigens (HBGAs) present on gastroduodenal epithelial cells. The soluble capsid protein may play a role in viral immunoevasion. The chain is Capsid protein VP1 from Norovirus (strain Human/NoV/United States/Norwalk/1968/GI) (Hu/NV/NV/1968/US).